We begin with the raw amino-acid sequence, 420 residues long: D-tagatose-1,6-bisphosphate aldolase subunit GatZ (420 aa).

This sequence belongs to the GatZ/KbaZ family. GatZ subfamily. In terms of assembly, forms a complex with GatY.

It functions in the pathway carbohydrate metabolism; D-tagatose 6-phosphate degradation; D-glyceraldehyde 3-phosphate and glycerone phosphate from D-tagatose 6-phosphate: step 2/2. In terms of biological role, component of the tagatose-1,6-bisphosphate aldolase GatYZ that is required for full activity and stability of the Y subunit. Could have a chaperone-like function for the proper and stable folding of GatY. When expressed alone, GatZ does not show any aldolase activity. Is involved in the catabolism of galactitol. In Escherichia coli O8 (strain IAI1), this protein is D-tagatose-1,6-bisphosphate aldolase subunit GatZ.